The following is a 158-amino-acid chain: Cyclic pyranopterin monophosphate synthase (158 aa).

Substrate contacts are provided by residues 73-75 (LCH) and 110-111 (ME). The active site involves Asp125.

The protein belongs to the MoaC family. Homohexamer; trimer of dimers.

The enzyme catalyses (8S)-3',8-cyclo-7,8-dihydroguanosine 5'-triphosphate = cyclic pyranopterin phosphate + diphosphate. Its pathway is cofactor biosynthesis; molybdopterin biosynthesis. Functionally, catalyzes the conversion of (8S)-3',8-cyclo-7,8-dihydroguanosine 5'-triphosphate to cyclic pyranopterin monophosphate (cPMP). This Azotobacter vinelandii (strain DJ / ATCC BAA-1303) protein is Cyclic pyranopterin monophosphate synthase.